Here is a 354-residue protein sequence, read N- to C-terminus: UDP-N-acetylglucosamine--N-acetylmuramyl-(pentapeptide) pyrophosphoryl-undecaprenol N-acetylglucosamine transferase (354 aa).

Residues 13 to 15, asparagine 125, serine 189, isoleucine 242, 261 to 266, and glutamine 286 each bind UDP-N-acetyl-alpha-D-glucosamine; these read SGG and ALTVSE.

The protein belongs to the glycosyltransferase 28 family. MurG subfamily.

The protein localises to the cell inner membrane. It carries out the reaction di-trans,octa-cis-undecaprenyl diphospho-N-acetyl-alpha-D-muramoyl-L-alanyl-D-glutamyl-meso-2,6-diaminopimeloyl-D-alanyl-D-alanine + UDP-N-acetyl-alpha-D-glucosamine = di-trans,octa-cis-undecaprenyl diphospho-[N-acetyl-alpha-D-glucosaminyl-(1-&gt;4)]-N-acetyl-alpha-D-muramoyl-L-alanyl-D-glutamyl-meso-2,6-diaminopimeloyl-D-alanyl-D-alanine + UDP + H(+). Its pathway is cell wall biogenesis; peptidoglycan biosynthesis. Cell wall formation. Catalyzes the transfer of a GlcNAc subunit on undecaprenyl-pyrophosphoryl-MurNAc-pentapeptide (lipid intermediate I) to form undecaprenyl-pyrophosphoryl-MurNAc-(pentapeptide)GlcNAc (lipid intermediate II). The sequence is that of UDP-N-acetylglucosamine--N-acetylmuramyl-(pentapeptide) pyrophosphoryl-undecaprenol N-acetylglucosamine transferase from Buchnera aphidicola subsp. Acyrthosiphon pisum (strain 5A).